A 236-amino-acid chain; its full sequence is Purine nucleoside phosphorylase DeoD-type 1 (236 aa).

His5 contributes to the a purine D-ribonucleoside binding site. Phosphate-binding positions include Gly21, Arg25, Arg44, and Arg88–Ser91. Residues Glu180–Glu182 and Thr204–Asp205 each bind a purine D-ribonucleoside. Asp205 serves as the catalytic Proton donor.

It belongs to the PNP/UDP phosphorylase family. As to quaternary structure, homohexamer; trimer of homodimers.

It carries out the reaction a purine D-ribonucleoside + phosphate = a purine nucleobase + alpha-D-ribose 1-phosphate. It catalyses the reaction a purine 2'-deoxy-D-ribonucleoside + phosphate = a purine nucleobase + 2-deoxy-alpha-D-ribose 1-phosphate. Its function is as follows. Catalyzes the reversible phosphorolytic breakdown of the N-glycosidic bond in the beta-(deoxy)ribonucleoside molecules, with the formation of the corresponding free purine bases and pentose-1-phosphate. The protein is Purine nucleoside phosphorylase DeoD-type 1 of Shewanella oneidensis (strain ATCC 700550 / JCM 31522 / CIP 106686 / LMG 19005 / NCIMB 14063 / MR-1).